A 163-amino-acid polypeptide reads, in one-letter code: Regulator of chromosome segregation (163 aa).

Interacts with CpsD and ParB.

The protein localises to the cytoplasm. The protein resides in the nucleoid. It is found in the cell membrane. Its function is as follows. Required for cell division and chromosome segregation. Binds to DNA and is involved in segregating the origin of replication (oriC) region to new daughter cells. When the nucleoid is not properly segregated, involved in blocking the cell division to protect the nucleoid against premature truncation by the newly forming septum, a function which is dependent on CpsD and its autophosphorylation level. This chain is Regulator of chromosome segregation, found in Streptococcus pneumoniae serotype 2 (strain D39 / NCTC 7466).